A 150-amino-acid chain; its full sequence is Large ribosomal subunit protein uL13 (150 aa).

Belongs to the universal ribosomal protein uL13 family. In terms of assembly, part of the 50S ribosomal subunit.

In terms of biological role, this protein is one of the early assembly proteins of the 50S ribosomal subunit, although it is not seen to bind rRNA by itself. It is important during the early stages of 50S assembly. The chain is Large ribosomal subunit protein uL13 from Sulfurihydrogenibium sp. (strain YO3AOP1).